Reading from the N-terminus, the 65-residue chain is Large ribosomal subunit protein bL35 (65 aa).

Positions 1–16 (MPKMKTKKSAAKRFKV) are enriched in basic residues. Positions 1–25 (MPKMKTKKSAAKRFKVRGSGSIKRG) are disordered.

The protein belongs to the bacterial ribosomal protein bL35 family.

The chain is Large ribosomal subunit protein bL35 from Bordetella parapertussis (strain 12822 / ATCC BAA-587 / NCTC 13253).